A 161-amino-acid polypeptide reads, in one-letter code: ATP synthase subunit b (161 aa).

A helical transmembrane segment spans residues 10-29 (AVVQLLNFLFLLWILNKLLY).

It belongs to the ATPase B chain family. As to quaternary structure, F-type ATPases have 2 components, F(1) - the catalytic core - and F(0) - the membrane proton channel. F(1) has five subunits: alpha(3), beta(3), gamma(1), delta(1), epsilon(1). F(0) has three main subunits: a(1), b(2) and c(10-14). The alpha and beta chains form an alternating ring which encloses part of the gamma chain. F(1) is attached to F(0) by a central stalk formed by the gamma and epsilon chains, while a peripheral stalk is formed by the delta and b chains.

The protein resides in the cell inner membrane. F(1)F(0) ATP synthase produces ATP from ADP in the presence of a proton or sodium gradient. F-type ATPases consist of two structural domains, F(1) containing the extramembraneous catalytic core and F(0) containing the membrane proton channel, linked together by a central stalk and a peripheral stalk. During catalysis, ATP synthesis in the catalytic domain of F(1) is coupled via a rotary mechanism of the central stalk subunits to proton translocation. Its function is as follows. Component of the F(0) channel, it forms part of the peripheral stalk, linking F(1) to F(0). This is ATP synthase subunit b from Fervidobacterium nodosum (strain ATCC 35602 / DSM 5306 / Rt17-B1).